We begin with the raw amino-acid sequence, 561 residues long: Protein NRT1/ PTR FAMILY 5.13 (561 aa).

A helical transmembrane segment spans residues 78–98 (AWSGISTILPLLGAFVADAFL). The residue at position 103 (Thr-103) is a Phosphothreonine. Transmembrane regions (helical) follow at residues 104–124 (IIIA…SAFL), 133–153 (SSPS…VAIG), 183–203 (FFNW…LVVV), 211–231 (WALG…LFVL), 324–344 (IPVW…MTFF), 361–381 (IPPA…VPIY), 405–425 (IGTG…VESK), 447–467 (IWWL…TLVG), 486–506 (AIYL…IYLI), and 530–550 (YFYW…LFIS).

Belongs to the major facilitator superfamily. Proton-dependent oligopeptide transporter (POT/PTR) (TC 2.A.17) family. In terms of tissue distribution, expressed in roots, flowers and siliques. Detected in stems and leaves.

It is found in the membrane. The protein is Protein NRT1/ PTR FAMILY 5.13 (NPF5.13) of Arabidopsis thaliana (Mouse-ear cress).